The following is a 225-amino-acid chain: Uridylate kinase (225 aa).

9 to 10 provides a ligand contact to ATP; the sequence is GS. A UMP-binding site is contributed by Gly46. 2 residues coordinate ATP: Gly47 and Arg51. UMP-binding positions include Asp67 and 115–121; that span reads THPAHTT. ATP-binding residues include Thr141, Asn142, Tyr147, and Asp150.

Belongs to the UMP kinase family. In terms of assembly, homohexamer.

It localises to the cytoplasm. It catalyses the reaction UMP + ATP = UDP + ADP. It functions in the pathway pyrimidine metabolism; CTP biosynthesis via de novo pathway; UDP from UMP (UMPK route): step 1/1. With respect to regulation, inhibited by UTP. Functionally, catalyzes the reversible phosphorylation of UMP to UDP. This is Uridylate kinase from Methanococcus maripaludis (strain DSM 14266 / JCM 13030 / NBRC 101832 / S2 / LL).